A 334-amino-acid chain; its full sequence is tRNA N6-adenosine threonylcarbamoyltransferase (334 aa).

Positions 107 and 111 each coordinate Fe cation. Residues 129 to 133 (LVSGG), D162, G175, and N269 each bind substrate. D297 contributes to the Fe cation binding site.

It belongs to the KAE1 / TsaD family. Fe(2+) serves as cofactor.

The protein resides in the cytoplasm. It catalyses the reaction L-threonylcarbamoyladenylate + adenosine(37) in tRNA = N(6)-L-threonylcarbamoyladenosine(37) in tRNA + AMP + H(+). In terms of biological role, required for the formation of a threonylcarbamoyl group on adenosine at position 37 (t(6)A37) in tRNAs that read codons beginning with adenine. Is involved in the transfer of the threonylcarbamoyl moiety of threonylcarbamoyl-AMP (TC-AMP) to the N6 group of A37, together with TsaE and TsaB. TsaD likely plays a direct catalytic role in this reaction. This is tRNA N6-adenosine threonylcarbamoyltransferase from Campylobacter concisus (strain 13826).